The sequence spans 186 residues: Imidazoleglycerol-phosphate dehydratase (186 aa).

This sequence belongs to the imidazoleglycerol-phosphate dehydratase family.

Its subcellular location is the cytoplasm. The enzyme catalyses D-erythro-1-(imidazol-4-yl)glycerol 3-phosphate = 3-(imidazol-4-yl)-2-oxopropyl phosphate + H2O. It functions in the pathway amino-acid biosynthesis; L-histidine biosynthesis; L-histidine from 5-phospho-alpha-D-ribose 1-diphosphate: step 6/9. In Dictyoglomus turgidum (strain DSM 6724 / Z-1310), this protein is Imidazoleglycerol-phosphate dehydratase.